The following is a 300-amino-acid chain: DNA repair protein PprA (300 aa).

The residue at position 88 (Thr88) is a Phosphothreonine. Ser128 is subject to Phosphoserine. Thr160 is modified (phosphothreonine).

Post-translationally, phosphorylated by RqkA in vitro. Phosphorylated primarily at Thr-88, and to a little extent at Ser-128 and Thr-160.

With respect to regulation, phosphorylation increases DNA binding affinity. Its function is as follows. dsDNA-binding protein that contributes to the ionizing radiation resistance of D.radiodurans. Plays a role in DNA repair and genome reconstitution, and is necessary for recovery from severe genomic fragmentation as a result of exposure to severe levels of ionizing radiation. In vitro, binds to double-stranded DNA carrying strand breaks and stimulates the DNA end-joining reaction catalyzed by DNA ligases. Thus, PprA plays a critical role in a non-homologous end-joining (NHEJ) pathway for the repair of radiation-induced DNA double-strands breaks. Cannot bind to dsDNA without strand breaks or single-stranded DNA. The sequence is that of DNA repair protein PprA (pprA) from Deinococcus radiodurans (strain ATCC 13939 / DSM 20539 / JCM 16871 / CCUG 27074 / LMG 4051 / NBRC 15346 / NCIMB 9279 / VKM B-1422 / R1).